We begin with the raw amino-acid sequence, 865 residues long: Aconitate hydratase B (865 aa).

Substrate-binding positions include Arg-191, Ser-244–Arg-246, Gln-414–Thr-416, and Ser-498. Positions 710, 769, and 772 each coordinate [4Fe-4S] cluster. Positions 791 and 796 each coordinate substrate.

This sequence belongs to the aconitase/IPM isomerase family. Monomer. Requires [4Fe-4S] cluster as cofactor.

It catalyses the reaction citrate = D-threo-isocitrate. The enzyme catalyses (2S,3R)-3-hydroxybutane-1,2,3-tricarboxylate = 2-methyl-cis-aconitate + H2O. It functions in the pathway carbohydrate metabolism; tricarboxylic acid cycle; isocitrate from oxaloacetate: step 2/2. It participates in organic acid metabolism; propanoate degradation. Involved in the catabolism of short chain fatty acids (SCFA) via the tricarboxylic acid (TCA)(acetyl degradation route) and the 2-methylcitrate cycle I (propionate degradation route). Catalyzes the reversible isomerization of citrate to isocitrate via cis-aconitate. Also catalyzes the hydration of 2-methyl-cis-aconitate to yield (2R,3S)-2-methylisocitrate. The apo form of AcnB functions as a RNA-binding regulatory protein which regulates FliC synthesis via interaction with the ftsH transcript to decrease the intracellular levels of FtsH. The lower levels of FtsH protease activity then influence sigma-32, DnaK and ultimately FliC production. The sequence is that of Aconitate hydratase B (acnB) from Salmonella typhimurium (strain LT2 / SGSC1412 / ATCC 700720).